The primary structure comprises 266 residues: Undecaprenyl-diphosphatase (266 aa).

7 consecutive transmembrane segments (helical) span residues 41–61 (YAYS…LIYF), 82–102 (LVYI…LYYV), 106–126 (WLVV…AVVL), 159–179 (AVSV…LLLL), 191–211 (FVLV…SEGG), 213–233 (VATA…IITI), and 246–266 (VLVN…RIIF).

The protein belongs to the UppP family.

The protein localises to the cell membrane. It catalyses the reaction di-trans,octa-cis-undecaprenyl diphosphate + H2O = di-trans,octa-cis-undecaprenyl phosphate + phosphate + H(+). Its function is as follows. Catalyzes the dephosphorylation of undecaprenyl diphosphate (UPP). This Pyrobaculum aerophilum (strain ATCC 51768 / DSM 7523 / JCM 9630 / CIP 104966 / NBRC 100827 / IM2) protein is Undecaprenyl-diphosphatase.